The following is a 235-amino-acid chain: Orotidine 5'-phosphate decarboxylase (235 aa).

Substrate contacts are provided by residues Asp-12, Lys-34, 61–70, Thr-116, Arg-177, Gln-186, and Arg-207; that span reads DMKLLDIDNT. Lys-63 (proton donor) is an active-site residue.

This sequence belongs to the OMP decarboxylase family. Type 1 subfamily. Homodimer.

It carries out the reaction orotidine 5'-phosphate + H(+) = UMP + CO2. The protein operates within pyrimidine metabolism; UMP biosynthesis via de novo pathway; UMP from orotate: step 2/2. In terms of biological role, catalyzes the decarboxylation of orotidine 5'-monophosphate (OMP) to uridine 5'-monophosphate (UMP). This chain is Orotidine 5'-phosphate decarboxylase, found in Rhizobium leguminosarum bv. trifolii (strain WSM2304).